A 332-amino-acid chain; its full sequence is Sesquiterpene synthase MBR_10393 (332 aa).

Residues aspartate 91 and aspartate 96 each contribute to the Mg(2+) site. A DDXXXD motif motif is present at residues 91-96 (DDLFVD). Position 184 (arginine 184) interacts with substrate. Mg(2+)-binding residues include asparagine 230, serine 234, and glutamate 238.

Belongs to the terpene synthase family. Requires Mg(2+) as cofactor.

The enzyme catalyses (2E,6E)-farnesyl diphosphate + H2O = (+)-corvol ether B + diphosphate. It catalyses the reaction (2E,6E)-farnesyl diphosphate + H2O = (+)-corvol ether A + diphosphate. Terpene synthase that catalyzes the conversion of (2E,6E)-farnesyl diphosphate (FPP) into sesquiterpenes which are important for fungi-environment interactions. Produces a mixture consisting of 8 sesquiterpenes including corvol ethers A and B, as well as traces of epizonarene, gamma-cadinene, delta-cadinene, alpha-cadinene, alpha-cadinol, and an unidentified sesquiterpene. The major product is corvol ether B. This is Sesquiterpene synthase MBR_10393 from Metarhizium brunneum (strain ARSEF 3297).